The chain runs to 270 residues: 5'-nucleotidase SurE (270 aa).

A divalent metal cation-binding residues include aspartate 14, aspartate 15, serine 46, and asparagine 104.

Belongs to the SurE nucleotidase family. Requires a divalent metal cation as cofactor.

The protein localises to the cytoplasm. The catalysed reaction is a ribonucleoside 5'-phosphate + H2O = a ribonucleoside + phosphate. Its function is as follows. Nucleotidase that shows phosphatase activity on nucleoside 5'-monophosphates. This Microcystis aeruginosa (strain NIES-843 / IAM M-2473) protein is 5'-nucleotidase SurE.